The following is a 111-amino-acid chain: Putative ciliary rootlet coiled-coil protein-like 1 protein (111 aa).

Residues 21-86 are a coiled coil; that stretch reads MELELSVTKL…RQAEQEATVA (66 aa).

This sequence belongs to the rootletin family.

The protein is Putative ciliary rootlet coiled-coil protein-like 1 protein (CROCCP2) of Homo sapiens (Human).